A 35-amino-acid chain; its full sequence is Probable L,D-transpeptidase ErfK/SrfK (35 aa).

Residues 1-21 (MRRVKLLCTALMLLASHGALA) form the signal peptide.

This sequence belongs to the YkuD family.

Its subcellular location is the periplasm. Its pathway is cell wall biogenesis; peptidoglycan biosynthesis. In Klebsiella aerogenes (Enterobacter aerogenes), this protein is Probable L,D-transpeptidase ErfK/SrfK (erfK).